A 72-amino-acid chain; its full sequence is Translation initiation factor IF-1 (72 aa).

The S1-like domain occupies 2–72; that stretch reads AKEDCIEMQG…SKGRIIFRSR (71 aa).

It belongs to the IF-1 family. As to quaternary structure, component of the 30S ribosomal translation pre-initiation complex which assembles on the 30S ribosome in the order IF-2 and IF-3, IF-1 and N-formylmethionyl-tRNA(fMet); mRNA recruitment can occur at any time during PIC assembly.

It localises to the cytoplasm. Functionally, one of the essential components for the initiation of protein synthesis. Stabilizes the binding of IF-2 and IF-3 on the 30S subunit to which N-formylmethionyl-tRNA(fMet) subsequently binds. Helps modulate mRNA selection, yielding the 30S pre-initiation complex (PIC). Upon addition of the 50S ribosomal subunit IF-1, IF-2 and IF-3 are released leaving the mature 70S translation initiation complex. This is Translation initiation factor IF-1 from Haemophilus influenzae (strain ATCC 51907 / DSM 11121 / KW20 / Rd).